The following is a 279-amino-acid chain: Toxin TxP-I (279 aa).

An N-terminal signal peptide occupies residues 1–14 (MNLFFLFIIPTILA). A propeptide spanning residues 15-27 (VKPFRSFNNISLI) is cleaved from the precursor.

Contains several disulfide bonds. As to expression, posterior glands which appear to be connected with the stylet through a series of ducts.

Its subcellular location is the secreted. Part of a complex mixture of neurotoxins which P.tritici utilizes to capture prey. It has contracting-paralyzing activity in insects. The chain is Toxin TxP-I from Pyemotes tritici (Straw itch mite).